Here is a 294-residue protein sequence, read N- to C-terminus: Indole-3-glycerol phosphate synthase (294 aa).

It belongs to the TrpC family.

It catalyses the reaction 1-(2-carboxyphenylamino)-1-deoxy-D-ribulose 5-phosphate + H(+) = (1S,2R)-1-C-(indol-3-yl)glycerol 3-phosphate + CO2 + H2O. The protein operates within amino-acid biosynthesis; L-tryptophan biosynthesis; L-tryptophan from chorismate: step 4/5. The polypeptide is Indole-3-glycerol phosphate synthase (Synechococcus sp. (strain RCC307)).